We begin with the raw amino-acid sequence, 347 residues long: Putative coenzyme F420-dependent oxidoreductase Rv3520c (347 aa).

This Mycobacterium tuberculosis (strain ATCC 25618 / H37Rv) protein is Putative coenzyme F420-dependent oxidoreductase Rv3520c.